Reading from the N-terminus, the 77-residue chain is Acyl carrier protein (77 aa).

The Carrier domain maps to 1 to 76 (MADFEKVKSI…DVTKFIDNLK (76 aa)). An O-(pantetheine 4'-phosphoryl)serine modification is found at Ser36.

The protein belongs to the acyl carrier protein (ACP) family. 4'-phosphopantetheine is transferred from CoA to a specific serine of apo-ACP by AcpS. This modification is essential for activity because fatty acids are bound in thioester linkage to the sulfhydryl of the prosthetic group.

It localises to the cytoplasm. It participates in lipid metabolism; fatty acid biosynthesis. Its function is as follows. Carrier of the growing fatty acid chain in fatty acid biosynthesis. The protein is Acyl carrier protein of Leptospira borgpetersenii serovar Hardjo-bovis (strain JB197).